The chain runs to 135 residues: uncharacterized protein (135 aa).

This is an uncharacterized protein from Bacillus subtilis (strain 168).